A 77-amino-acid chain; its full sequence is Liver-expressed antimicrobial peptide 2 (77 aa).

Residues Met-1–Gly-22 form the signal peptide. The propeptide occupies Ser-23–Arg-37. 2 disulfide bridges follow: Cys-54/Cys-65 and Cys-60/Cys-70.

This sequence belongs to the LEAP2 family.

The protein resides in the secreted. Functionally, has an antimicrobial activity. The sequence is that of Liver-expressed antimicrobial peptide 2 (LEAP2) from Macaca mulatta (Rhesus macaque).